Reading from the N-terminus, the 532-residue chain is Egg peptide speract receptor (532 aa).

The N-terminal stretch at 1 to 30 (MGLPMMLQQYCWAACLVICIAISSVDDVGA) is a signal peptide. At 31–491 (EQNYGREAVE…VVCEGSTAPP (461 aa)) the chain is on the extracellular side. SRCR domains lie at 43 to 144 (IRLI…VECL), 153 to 257 (LRMI…VVCK), 264 to 366 (IRLM…VVCA), and 382 to 485 (VRIV…VVCE). 12 disulfide bridges follow: cysteine 68/cysteine 133, cysteine 81/cysteine 143, cysteine 112/cysteine 122, cysteine 178/cysteine 244, cysteine 191/cysteine 256, cysteine 223/cysteine 233, cysteine 289/cysteine 355, cysteine 302/cysteine 365, cysteine 335/cysteine 345, cysteine 406/cysteine 475, cysteine 419/cysteine 484, and cysteine 454/cysteine 465. Asparagine 78 and asparagine 115 each carry an N-linked (GlcNAc...) asparagine glycan. An N-linked (GlcNAc...) asparagine glycan is attached at asparagine 459. A helical membrane pass occupies residues 492–520 (SGMSIAVIGGAAGGGVAGLAVAAFAFYYI). Residues 521-532 (KFVKPAGGGGQA) are Cytoplasmic-facing.

Its subcellular location is the membrane. In terms of biological role, receptor for the egg peptide speract. This Strongylocentrotus purpuratus (Purple sea urchin) protein is Egg peptide speract receptor.